A 174-amino-acid polypeptide reads, in one-letter code: UPF0316 protein Dhaf_3052 (174 aa).

3 helical membrane-spanning segments follow: residues 4–24 (ILQFVLIIITINITYVTLTTI), 35–55 (VYASLLSVLEVFIYIMGLSII), and 59–79 (LDSYWNIAAYCCGYGVGVYLG).

The protein belongs to the UPF0316 family.

The protein resides in the cell membrane. This chain is UPF0316 protein Dhaf_3052, found in Desulfitobacterium hafniense (strain DSM 10664 / DCB-2).